The chain runs to 159 residues: MNIRIGHGFDVHKFGGDSPLVLGGVTVPYDSGLIAHSDGDVVLHAISDAILGAMALGDIGKHFPDTDANFAGADSRVLLKHCYQLALQKQFVLGNLDVTIIAQAPKMAPHIEAIRQCLSADLQTDIDNINVKATTTENLGFTGRKEGIAVEAVVLMKSQ.

Residues D10 and H12 each contribute to the a divalent metal cation site. 4-CDP-2-C-methyl-D-erythritol 2-phosphate is bound by residues 10 to 12 (DVH) and 36 to 37 (HS). H44 provides a ligand contact to a divalent metal cation. Residues 58–60 (DIG), 63–67 (FPDTD), 102–108 (AQAPKMA), 134–137 (TTTE), F141, and R144 contribute to the 4-CDP-2-C-methyl-D-erythritol 2-phosphate site.

Belongs to the IspF family. In terms of assembly, homotrimer. The cofactor is a divalent metal cation.

The catalysed reaction is 4-CDP-2-C-methyl-D-erythritol 2-phosphate = 2-C-methyl-D-erythritol 2,4-cyclic diphosphate + CMP. It participates in isoprenoid biosynthesis; isopentenyl diphosphate biosynthesis via DXP pathway; isopentenyl diphosphate from 1-deoxy-D-xylulose 5-phosphate: step 4/6. Its function is as follows. Involved in the biosynthesis of isopentenyl diphosphate (IPP) and dimethylallyl diphosphate (DMAPP), two major building blocks of isoprenoid compounds. Catalyzes the conversion of 4-diphosphocytidyl-2-C-methyl-D-erythritol 2-phosphate (CDP-ME2P) to 2-C-methyl-D-erythritol 2,4-cyclodiphosphate (ME-CPP) with a corresponding release of cytidine 5-monophosphate (CMP). The polypeptide is 2-C-methyl-D-erythritol 2,4-cyclodiphosphate synthase (Shewanella frigidimarina (strain NCIMB 400)).